Here is a 315-residue protein sequence, read N- to C-terminus: DNA-directed RNA polymerase subunit alpha (315 aa).

Residues 1-228 (MLEIEKPIIE…EHFKLFMSLT (228 aa)) form an alpha N-terminal domain (alpha-NTD) region. Positions 245-315 (KEKVLEMTVE…LGLCLKLNDE (71 aa)) are alpha C-terminal domain (alpha-CTD).

Belongs to the RNA polymerase alpha chain family. In terms of assembly, homodimer. The RNAP catalytic core consists of 2 alpha, 1 beta, 1 beta' and 1 omega subunit. When a sigma factor is associated with the core the holoenzyme is formed, which can initiate transcription.

It carries out the reaction RNA(n) + a ribonucleoside 5'-triphosphate = RNA(n+1) + diphosphate. Functionally, DNA-dependent RNA polymerase catalyzes the transcription of DNA into RNA using the four ribonucleoside triphosphates as substrates. The sequence is that of DNA-directed RNA polymerase subunit alpha from Clostridium botulinum (strain Alaska E43 / Type E3).